Reading from the N-terminus, the 177-residue chain is Large ribosomal subunit protein uL6 (177 aa).

This sequence belongs to the universal ribosomal protein uL6 family. Part of the 50S ribosomal subunit.

This protein binds to the 23S rRNA, and is important in its secondary structure. It is located near the subunit interface in the base of the L7/L12 stalk, and near the tRNA binding site of the peptidyltransferase center. This Micrococcus luteus (strain ATCC 4698 / DSM 20030 / JCM 1464 / CCM 169 / CCUG 5858 / IAM 1056 / NBRC 3333 / NCIMB 9278 / NCTC 2665 / VKM Ac-2230) (Micrococcus lysodeikticus) protein is Large ribosomal subunit protein uL6.